The primary structure comprises 317 residues: MLYQLLHTVLSVTGVTLNAFMMYLALTKSPKIMRPCSAIITIKTFTDILTSAMSFFVMQRIVTDGSSILVIPTGPCTRLGPTACYVGHMFMLCFLECNLIWMISSYIFRYYILYVRDPSIKSLVFVALCLSIPSFIHMAAWIRSYDPNEAFVVPDSFGLASSHLILGGHIVYRSTITLILQLFITSVLVLIAYAWIRNTLLSFAIKMGSDKNDVKNLNARLVKVINFQVFLPTFIFLGFFIFAAMFGRYITVNIAQYLVSIAFMFSPICSPFSYILFVPHYLNVITGNKKPAENRATDMCAVRAFKNPNVSVTMTNA.

Helical transmembrane passes span leucine 5–alanine 25, alanine 38–methionine 58, alanine 83–isoleucine 103, serine 122–isoleucine 142, isoleucine 176–isoleucine 196, phenylalanine 227–glycine 247, and leucine 258–valine 278.

The protein belongs to the nematode receptor-like protein srd family.

It localises to the membrane. The protein is Serpentine receptor class delta-26 (srd-26) of Caenorhabditis elegans.